A 640-amino-acid polypeptide reads, in one-letter code: Chaperone protein HtpG (640 aa).

The a; substrate-binding stretch occupies residues 1 to 348 (MADVAHQETH…SNDLPLNVSR (348 aa)). Positions 349–565 (EILQDNKITQ…GTGMSTQMIK (217 aa)) are b. A c region spans residues 566-640 (LMQAAGQPVP…LNTLLMNLAK (75 aa)).

It belongs to the heat shock protein 90 family. In terms of assembly, homodimer.

The protein localises to the cytoplasm. Molecular chaperone. Has ATPase activity. The polypeptide is Chaperone protein HtpG (Pseudoalteromonas atlantica (strain T6c / ATCC BAA-1087)).